We begin with the raw amino-acid sequence, 70 residues long: Large ribosomal subunit protein bL31 (70 aa).

The Zn(2+) site is built by Cys16, Cys18, Cys37, and Cys40.

Belongs to the bacterial ribosomal protein bL31 family. Type A subfamily. In terms of assembly, part of the 50S ribosomal subunit. Requires Zn(2+) as cofactor.

Its function is as follows. Binds the 23S rRNA. The sequence is that of Large ribosomal subunit protein bL31 from Haemophilus influenzae (strain 86-028NP).